The chain runs to 198 residues: Probable GTP-binding protein EngB (198 aa).

In terms of domain architecture, EngB-type G spans 36–198; that stretch reads SDPQFAFIGR…NLSKLQELLE (163 aa). GTP is bound by residues 44–51, 70–74, 88–91, 155–158, and 182–184; these read GRSNVGKS, GRTQL, DLPG, NKID, and ISA. Residues serine 51 and threonine 72 each coordinate Mg(2+).

This sequence belongs to the TRAFAC class TrmE-Era-EngA-EngB-Septin-like GTPase superfamily. EngB GTPase family. Mg(2+) is required as a cofactor.

Its function is as follows. Necessary for normal cell division and for the maintenance of normal septation. This chain is Probable GTP-binding protein EngB, found in Mesomycoplasma hyopneumoniae (strain 7448) (Mycoplasma hyopneumoniae).